Here is a 434-residue protein sequence, read N- to C-terminus: Alpha-enolase (434 aa).

S2 carries the post-translational modification N-acetylserine. K5 is modified (N6-acetyllysine). S27 is subject to Phosphoserine. Mg(2+) is bound at residue S40. A Phosphotyrosine modification is found at Y44. K60 carries the N6-acetyllysine; alternate modification. N6-succinyllysine; alternate is present on K60. N6-acetyllysine occurs at positions 64 and 71. K89 bears the N6-acetyllysine; alternate mark. An N6-succinyllysine; alternate modification is found at K89. 2 positions are modified to N6-acetyllysine: K92 and K126. Substrate-binding residues include H158 and E167. N6-acetyllysine is present on residues K193 and K199. The residue at position 202 (K202) is an N6-acetyllysine; alternate. K202 participates in a covalent cross-link: Glycyl lysine isopeptide (Lys-Gly) (interchain with G-Cter in SUMO2); alternate. E210 functions as the Proton donor in the catalytic mechanism. 2 positions are modified to N6-acetyllysine; alternate: K228 and K233. The residue at position 228 (K228) is an N6-succinyllysine; alternate. K228 bears the N6-(2-hydroxyisobutyryl)lysine; alternate mark. K233 carries the post-translational modification N6-malonyllysine; alternate. D245 is a binding site for Mg(2+). S254 carries the phosphoserine modification. The residue at position 256 (K256) is an N6-acetyllysine. Residues S263 and S272 each carry the phosphoserine modification. K281 is modified (N6-acetyllysine; alternate). K281 carries the N6-(2-hydroxyisobutyryl)lysine; alternate modification. The residue at position 285 (K285) is an N6-acetyllysine. Y287 carries the post-translational modification Phosphotyrosine. Position 291 is a phosphoserine (S291). Mg(2+)-binding residues include E293 and D318. Substrate is bound by residues E293 and D318. An N6-acetyllysine mark is found at K335 and K343. The Proton acceptor role is filled by K343. Residues 370–373 (SHRS) and K394 each bind substrate. A required for interaction with PLG region spans residues 405-434 (AKYNQLLRIEEELGSKAKFAGRNFRNPLAK). K406 carries the post-translational modification N6-acetyllysine. K420 is subject to N6-acetyllysine; alternate. Position 420 is an N6-succinyllysine; alternate (K420). K420 is modified (N6-malonyllysine; alternate).

The protein belongs to the enolase family. As to quaternary structure, mammalian enolase is composed of 3 isozyme subunits, alpha, beta and gamma, which can form homodimers or heterodimers which are cell-type and development-specific. ENO1 interacts with PLG in the neuronal plasma membrane and promotes its activation. The C-terminal lysine is required for this binding. Interacts with ENO4 and PGAM2. Interacts with CMTM6. It depends on Mg(2+) as a cofactor. Post-translationally, ISGylated. In terms of processing, lysine 2-hydroxyisobutyrylation (Khib) by p300/EP300 activates the phosphopyruvate hydratase activity.

It localises to the cytoplasm. Its subcellular location is the cell membrane. The catalysed reaction is (2R)-2-phosphoglycerate = phosphoenolpyruvate + H2O. The protein operates within carbohydrate degradation; glycolysis; pyruvate from D-glyceraldehyde 3-phosphate: step 4/5. Its function is as follows. Glycolytic enzyme the catalyzes the conversion of 2-phosphoglycerate to phosphoenolpyruvate. In addition to glycolysis, involved in various processes such as growth control, hypoxia tolerance and allergic responses. May also function in the intravascular and pericellular fibrinolytic system due to its ability to serve as a receptor and activator of plasminogen on the cell surface of several cell-types such as leukocytes and neurons. Stimulates immunoglobulin production. This chain is Alpha-enolase (ENO1), found in Macaca fascicularis (Crab-eating macaque).